Reading from the N-terminus, the 203-residue chain is NAD(P)H dehydrogenase (quinone) (203 aa).

The 188-residue stretch at 7–194 folds into the Flavodoxin-like domain; it reads VLVLYHSSYG…SLARKQGAHV (188 aa). FMN-binding positions include 13-18 and 82-84; these read SSYGHI and TRF. An NAD(+)-binding site is contributed by Tyr-15. Trp-102 lines the substrate pocket. Residues 117–122 and His-137 contribute to the FMN site; that span reads STGTGG.

It belongs to the WrbA family. Requires FMN as cofactor.

The catalysed reaction is a quinone + NADH + H(+) = a quinol + NAD(+). It catalyses the reaction a quinone + NADPH + H(+) = a quinol + NADP(+). The chain is NAD(P)H dehydrogenase (quinone) from Parvibaculum lavamentivorans (strain DS-1 / DSM 13023 / NCIMB 13966).